The primary structure comprises 177 residues: PLAC8-like protein 1 (177 aa).

It belongs to the cornifelin family.

The chain is PLAC8-like protein 1 (PLAC8L1) from Homo sapiens (Human).